The primary structure comprises 71 residues: 8.6 kDa protein (71 aa).

The sequence is that of 8.6 kDa protein from Pseudomonas phage Pf1 (Bacteriophage Pf1).